The primary structure comprises 370 residues: Putative L-lysine 2,3-aminomutase aq_454 (370 aa).

Positions 107–322 (HRYPDRVLLN…RGRLSGFGIP (216 aa)) constitute a Radical SAM core domain. Positions 121, 125, and 128 each coordinate [4Fe-4S] cluster. N6-(pyridoxal phosphate)lysine is present on lysine 334.

Belongs to the radical SAM superfamily. KamA family. [4Fe-4S] cluster serves as cofactor. It depends on pyridoxal 5'-phosphate as a cofactor.

The protein is Putative L-lysine 2,3-aminomutase aq_454 of Aquifex aeolicus (strain VF5).